Consider the following 177-residue polypeptide: MIVTGNPVCAIALLLCLVFRASGEYELEMSSGGSNDGRSPSNDFGSCTDGKCTKRTTTTQESGISSGMWFGPRLGKRHKSNEKQQINPEIEMLVNALDQPGMRWTVITIPANEKRQPTQFTPRLGRGSEEKFIYSDATDRNEIDEDDPLFTPRLGRRVPWIPSPRLGRQSRSVSRKI.

An N-terminal signal peptide occupies residues 1–23; that stretch reads MIVTGNPVCAIALLLCLVFRASG. The propeptide occupies 24–54; sequence EYELEMSSGGSNDGRSPSNDFGSCTDGKCTK. The segment at 28–73 is disordered; that stretch reads EMSSGGSNDGRSPSNDFGSCTDGKCTKRTTTTQESGISSGMWFGPR. Polar residues predominate over residues 31-45; sequence SGGSNDGRSPSNDFG. Residues 47–59 show a composition bias toward low complexity; sequence CTDGKCTKRTTTT. L74 bears the Leucine amide mark. Residues 78–113 constitute a propeptide that is removed on maturation; it reads HKSNEKQQINPEIEMLVNALDQPGMRWTVITIPANE. Leucine amide is present on residues L124, L154, and L166. A propeptide spanning residues 169–177 is cleaved from the precursor; sequence QSRSVSRKI.

It belongs to the pyrokinin family. As to expression, pyrokinins (PK) 1 to 4 are expressed in the retrocerebral complex. PK 1 is expressed in central brain, anntennal lobes and abominal ganglia. PK 2 is expressed in optical lobes and in gnathal, thoracic and abdominal ganglia. PK 3 is expressed in optical lobes and in thoracic and abdominal ganglia (at protein level).

The protein localises to the secreted. Functionally, pyrokinins mediate visceral muscle contractile activity (myotropic activity). The chain is PBAN-type neuropeptides from Camponotus floridanus (Florida carpenter ant).